We begin with the raw amino-acid sequence, 335 residues long: Methylthioribose-1-phosphate isomerase (335 aa).

Residues 43-45, arginine 86, and glutamine 193 contribute to the substrate site; that span reads RGA. Residue aspartate 234 is the Proton donor of the active site. 244 to 245 lines the substrate pocket; that stretch reads NK.

This sequence belongs to the eIF-2B alpha/beta/delta subunits family. MtnA subfamily.

The catalysed reaction is 5-(methylsulfanyl)-alpha-D-ribose 1-phosphate = 5-(methylsulfanyl)-D-ribulose 1-phosphate. Its pathway is amino-acid biosynthesis; L-methionine biosynthesis via salvage pathway; L-methionine from S-methyl-5-thio-alpha-D-ribose 1-phosphate: step 1/6. Catalyzes the interconversion of methylthioribose-1-phosphate (MTR-1-P) into methylthioribulose-1-phosphate (MTRu-1-P). The protein is Methylthioribose-1-phosphate isomerase of Parabacteroides distasonis (strain ATCC 8503 / DSM 20701 / CIP 104284 / JCM 5825 / NCTC 11152).